The chain runs to 122 residues: Holo-[acyl-carrier-protein] synthase (122 aa).

The Mg(2+) site is built by aspartate 8 and glutamate 56.

Belongs to the P-Pant transferase superfamily. AcpS family. Mg(2+) serves as cofactor.

The protein resides in the cytoplasm. It carries out the reaction apo-[ACP] + CoA = holo-[ACP] + adenosine 3',5'-bisphosphate + H(+). Functionally, transfers the 4'-phosphopantetheine moiety from coenzyme A to a Ser of acyl-carrier-protein. This Salinispora arenicola (strain CNS-205) protein is Holo-[acyl-carrier-protein] synthase.